The sequence spans 193 residues: Holliday junction branch migration complex subunit RuvA (193 aa).

The segment at methionine 1 to methionine 64 is domain I. Residues threonine 65–proline 139 are domain II. The flexible linker stretch occupies residues proline 139 to glycine 143. The interval glycine 144–histidine 193 is domain III.

The protein belongs to the RuvA family. In terms of assembly, homotetramer. Forms an RuvA(8)-RuvB(12)-Holliday junction (HJ) complex. HJ DNA is sandwiched between 2 RuvA tetramers; dsDNA enters through RuvA and exits via RuvB. An RuvB hexamer assembles on each DNA strand where it exits the tetramer. Each RuvB hexamer is contacted by two RuvA subunits (via domain III) on 2 adjacent RuvB subunits; this complex drives branch migration. In the full resolvosome a probable DNA-RuvA(4)-RuvB(12)-RuvC(2) complex forms which resolves the HJ.

Its subcellular location is the cytoplasm. Functionally, the RuvA-RuvB-RuvC complex processes Holliday junction (HJ) DNA during genetic recombination and DNA repair, while the RuvA-RuvB complex plays an important role in the rescue of blocked DNA replication forks via replication fork reversal (RFR). RuvA specifically binds to HJ cruciform DNA, conferring on it an open structure. The RuvB hexamer acts as an ATP-dependent pump, pulling dsDNA into and through the RuvAB complex. HJ branch migration allows RuvC to scan DNA until it finds its consensus sequence, where it cleaves and resolves the cruciform DNA. This Acidithiobacillus ferrooxidans (strain ATCC 53993 / BNL-5-31) (Leptospirillum ferrooxidans (ATCC 53993)) protein is Holliday junction branch migration complex subunit RuvA.